The following is a 237-amino-acid chain: DNA repair protein RecO (237 aa).

It belongs to the RecO family.

Its function is as follows. Involved in DNA repair and RecF pathway recombination. This chain is DNA repair protein RecO, found in Rickettsia conorii (strain ATCC VR-613 / Malish 7).